An 850-amino-acid polypeptide reads, in one-letter code: Protein STB2 (850 aa).

A phosphoserine mark is found at S594 and S625.

The protein to yeast STB6. Interacts with SIN3.

The sequence is that of Protein STB2 (STB2) from Saccharomyces cerevisiae (strain ATCC 204508 / S288c) (Baker's yeast).